Reading from the N-terminus, the 306-residue chain is Acetyl-coenzyme A carboxylase carboxyl transferase subunit beta (306 aa).

The CoA carboxyltransferase N-terminal domain occupies 25 to 294; it reads LWIKDPTSGE…APEPSHAFSK (270 aa). Positions 287-306 are disordered; that stretch reads EPSHAFSKDSQTQISKTKAA. The span at 294–306 shows a compositional bias: polar residues; the sequence is KDSQTQISKTKAA.

The protein belongs to the AccD/PCCB family. As to quaternary structure, acetyl-CoA carboxylase is a heterohexamer composed of biotin carboxyl carrier protein (AccB), biotin carboxylase (AccC) and two subunits each of ACCase subunit alpha (AccA) and ACCase subunit beta (AccD).

The protein localises to the cytoplasm. It carries out the reaction N(6)-carboxybiotinyl-L-lysyl-[protein] + acetyl-CoA = N(6)-biotinyl-L-lysyl-[protein] + malonyl-CoA. The protein operates within lipid metabolism; malonyl-CoA biosynthesis; malonyl-CoA from acetyl-CoA: step 1/1. Component of the acetyl coenzyme A carboxylase (ACC) complex. Biotin carboxylase (BC) catalyzes the carboxylation of biotin on its carrier protein (BCCP) and then the CO(2) group is transferred by the transcarboxylase to acetyl-CoA to form malonyl-CoA. In Bartonella bacilliformis (strain ATCC 35685 / KC583 / Herrer 020/F12,63), this protein is Acetyl-coenzyme A carboxylase carboxyl transferase subunit beta.